The chain runs to 359 residues: Transcription elongation factor A N-terminal and central domain-containing protein (359 aa).

The TFIIS N-terminal domain occupies Met1–Thr82. Residues Cys84 to Ser118 are disordered. A compositionally biased stretch (polar residues) spans Ala104–Ser118. A TFIIS central domain is found at Val182–Gly298.

This Mus musculus (Mouse) protein is Transcription elongation factor A N-terminal and central domain-containing protein (Tceanc).